The following is a 297-amino-acid chain: Tumor necrosis factor receptor superfamily member 27 (297 aa).

Topologically, residues 1 to 138 are extracellular; that stretch reads MDCQENEYRD…AHTVPPREAT (138 aa). TNFR-Cys repeat units lie at residues 2–41, 43–83, and 85–118; these read DCQE…DAHC, VCPP…NAIC, and DCLP…EVQC. Cystine bridges form between C3/C15, C18/C31, C21/C41, C44/C58, C61/C75, C64/C83, C86/C104, and C107/C118. 2 N-linked (GlcNAc...) asparagine glycosylation sites follow: N74 and N77. A helical; Signal-anchor for type III membrane protein membrane pass occupies residues 139-159; that stretch reads LVALVGSLLVVFALAFLGLFF. Residues 160–297 are Cytoplasmic-facing; sequence LYCKQIFNRH…LYVPFEVPSL (138 aa).

As to quaternary structure, associates with TRAF1, TRAF3 and TRAF6.

The protein localises to the membrane. Functionally, receptor for EDA isoform A2, but not for EDA isoform A1. Mediates the activation of the NF-kappa-B and JNK pathways. Activation seems to be mediated by binding to TRAF3 and TRAF6. The protein is Tumor necrosis factor receptor superfamily member 27 (Eda2r) of Mus musculus (Mouse).